Reading from the N-terminus, the 281-residue chain is CDAN1-interacting nuclease 1 (281 aa).

T114 carries the post-translational modification Phosphothreonine.

The protein localises to the nucleus. Its subcellular location is the cytoplasm. In terms of biological role, plays a role in erythroid cell differentiation. In Homo sapiens (Human), this protein is CDAN1-interacting nuclease 1.